A 253-amino-acid polypeptide reads, in one-letter code: uncharacterized protein (253 aa).

Positions 1–19 (MHYLKKVTIYISLLILVSG) are cleaved as a signal peptide. Cys-20 carries N-palmitoyl cysteine lipidation. Cys-20 is lipidated: S-diacylglycerol cysteine.

It belongs to the staphylococcal tandem lipoprotein family.

The protein resides in the cell membrane. This is an uncharacterized protein from Staphylococcus epidermidis (strain ATCC 35984 / DSM 28319 / BCRC 17069 / CCUG 31568 / BM 3577 / RP62A).